A 320-amino-acid chain; its full sequence is ATP-dependent 6-phosphofructokinase isozyme 1 (320 aa).

Residue Gly-12 participates in ATP binding. ADP contacts are provided by residues 22–26 (RGVVR) and 55–60 (RYSVSD). Residues 73–74 (RF) and 103–106 (GDGS) each bind ATP. Asp-104 serves as a coordination point for Mg(2+). A substrate-binding site is contributed by 126-128 (TID). Catalysis depends on Asp-128, which acts as the Proton acceptor. Arg-155 lines the ADP pocket. Substrate contacts are provided by residues Arg-163 and 170–172 (MGR). ADP-binding positions include 186–188 (GCE), Lys-212, and 214–216 (KKH). Residues Glu-223, Arg-244, and 250 to 253 (HIQR) contribute to the substrate site.

Belongs to the phosphofructokinase type A (PFKA) family. ATP-dependent PFK group I subfamily. Prokaryotic clade 'B1' sub-subfamily. In terms of assembly, homotetramer. The cofactor is Mg(2+).

Its subcellular location is the cytoplasm. The enzyme catalyses beta-D-fructose 6-phosphate + ATP = beta-D-fructose 1,6-bisphosphate + ADP + H(+). Its pathway is carbohydrate degradation; glycolysis; D-glyceraldehyde 3-phosphate and glycerone phosphate from D-glucose: step 3/4. Its activity is regulated as follows. Allosterically activated by ADP and other diphosphonucleosides, and allosterically inhibited by phosphoenolpyruvate. Its function is as follows. Catalyzes the phosphorylation of D-fructose 6-phosphate to fructose 1,6-bisphosphate by ATP, the first committing step of glycolysis. The chain is ATP-dependent 6-phosphofructokinase isozyme 1 from Escherichia coli O6:H1 (strain CFT073 / ATCC 700928 / UPEC).